Consider the following 280-residue polypeptide: Acetylglutamate kinase (280 aa).

Residues 57–58 (GG), Arg79, and Asn174 contribute to the substrate site.

It belongs to the acetylglutamate kinase family. ArgB subfamily.

The protein localises to the cytoplasm. It carries out the reaction N-acetyl-L-glutamate + ATP = N-acetyl-L-glutamyl 5-phosphate + ADP. The protein operates within amino-acid biosynthesis; L-arginine biosynthesis; N(2)-acetyl-L-ornithine from L-glutamate: step 2/4. Functionally, catalyzes the ATP-dependent phosphorylation of N-acetyl-L-glutamate. In Helicobacter hepaticus (strain ATCC 51449 / 3B1), this protein is Acetylglutamate kinase.